A 340-amino-acid chain; its full sequence is Heat-inducible transcription repressor HrcA (340 aa).

The protein belongs to the HrcA family.

In terms of biological role, negative regulator of class I heat shock genes (grpE-dnaK-dnaJ and groELS operons). Prevents heat-shock induction of these operons. In Mycoplasma capricolum subsp. capricolum (strain California kid / ATCC 27343 / NCTC 10154), this protein is Heat-inducible transcription repressor HrcA.